The primary structure comprises 1094 residues: AP-3 complex subunit beta-1 (1094 aa).

A compositionally biased stretch (polar residues) spans 1–11 (MSSNSFPYNEQ). Disordered regions lie at residues 1–31 (MSSNSFPYNEQSGGGEATELGQEATSTISPS) and 268–292 (DNGKNFYESDDDQKEKTDKKKKPYT). Phosphoserine is present on residues Ser-276 and Ser-609. Positions 662 to 811 (PAGKAKQENS…EKKTKQDRTP (150 aa)) are disordered. Basic and acidic residues predominate over residues 666–677 (AKQENSAKKFYS). Acidic residues-rich tracts occupy residues 678–696 (ESEEEEDSSDSSSDSESES) and 705–726 (ESGEEGDSNEDSSEDSSSEQDS). Basic and acidic residues-rich tracts occupy residues 727 to 738 (ESGRESGLENKR) and 748 to 764 (GKSDSEDGEKENEKSKT). Phosphoserine occurs at positions 750 and 752. Positions 765–777 (SDSSNDESSSIED) are enriched in low complexity. Positions 778-791 (SSSDSESESEPESE) are enriched in acidic residues. Residues 792 to 811 (SESRRVTKEKEKKTKQDRTP) are compositionally biased toward basic and acidic residues.

It belongs to the adaptor complexes large subunit family. Adaptor protein complex 3 (AP-3) is a heterotetramer composed of two large adaptins (delta-type subunit AP3D1 and beta-type subunit AP3B1 or AP3B2), a medium adaptin (mu-type subunit AP3M1 or AP3M2) and a small adaptin (sigma-type subunit APS1 or AP3S2). AP-3 associates with the BLOC-1 complex. Interacts with KIF3A; interaction is direct; interaction is impaired by pyrophosphorylation of AP3B1. Phosphorylated on serine residues. Post-translationally, pyrophosphorylation by 5-diphosphoinositol pentakisphosphate (5-IP7) impairs interaction with KIF3A. Serine pyrophosphorylation is achieved by Mg(2+)-dependent, but enzyme independent transfer of a beta-phosphate from a inositol pyrophosphate to a pre-phosphorylated serine residue. As to expression, ubiquitously expressed.

It localises to the cytoplasmic vesicle. The protein resides in the clathrin-coated vesicle membrane. The protein localises to the golgi apparatus. Its function is as follows. Subunit of non-clathrin- and clathrin-associated adaptor protein complex 3 (AP-3) that plays a role in protein sorting in the late-Golgi/trans-Golgi network (TGN) and/or endosomes. The AP complexes mediate both the recruitment of clathrin to membranes and the recognition of sorting signals within the cytosolic tails of transmembrane cargo molecules. AP-3 appears to be involved in the sorting of a subset of transmembrane proteins targeted to lysosomes and lysosome-related organelles. In concert with the BLOC-1 complex, AP-3 is required to target cargos into vesicles assembled at cell bodies for delivery into neurites and nerve terminals. The chain is AP-3 complex subunit beta-1 (AP3B1) from Homo sapiens (Human).